The primary structure comprises 236 residues: Alpha-S2-casein (236 aa).

The first 15 residues, methionine 1–alanine 15, serve as a signal peptide directing secretion. Phosphoserine occurs at positions 23, 24, 25, 28, 47, 80, 81, 82, 85, 157, and 169. The segment at proline 72–glutamate 93 is disordered. Residues glutamate 84–glutamate 93 show a composition bias toward basic and acidic residues.

Belongs to the alpha-casein family. In terms of processing, there are at least three different forms found in milk, with varying degrees of phosphorylation. These include form 10-P which is phosphorylated at ten sites that have not been determined, form 11-P which is phosphorylated at eleven sites and form 12-P which is phosphorylated at twelve sites. In terms of tissue distribution, mammary gland specific. Secreted in milk.

It is found in the secreted. In terms of biological role, important role in the capacity of milk to transport calcium phosphate. The chain is Alpha-S2-casein from Equus asinus (Donkey).